A 506-amino-acid chain; its full sequence is Bone morphogenetic protein 6 (506 aa).

The first 20 residues, 1-20, serve as a signal peptide directing secretion; the sequence is MPGLGRRAQWLCWWWGLLCS. Positions 21 to 367 are excised as a propeptide; sequence CGPPPLRPPL…VSEVHVRTTR (347 aa). Disordered regions lie at residues 44-64, 87-125, and 139-195; these read AGGS…SGFL, PHRP…RLKS, and KDDE…PLTS. The segment covering 96-112 has biased composition (low complexity); sequence LQQPQSPVLPQQQQSQQ. Positions 140 to 153 are enriched in acidic residues; sequence DDEEDGVSEGEGLE. Residues asparagine 234, asparagine 262, asparagine 379, asparagine 397, and asparagine 447 are each glycosylated (N-linked (GlcNAc...) asparagine). The segment at 366–397 is disordered; the sequence is TRSASSRRRQQSRNRSTQSQDVSRGSSASDYN. Positions 386–397 are enriched in polar residues; that stretch reads DVSRGSSASDYN. 3 disulfides stabilise this stretch: cysteine 405–cysteine 471, cysteine 434–cysteine 503, and cysteine 438–cysteine 505.

Belongs to the TGF-beta family. As to quaternary structure, interacts with SOSTDC1. Interacts (when glycosylated) with type I receptor ACVR1; the interaction may induce HAMP expression. Interacts with type II receptor ACVR2B. Interacts with Hemojuvelin/HJV. Interacts with ERFE; the interaction inhibits BMP-induced transcription of HAMP. Interacts with BMPR1A/ALK3. Forms heterodimers with BMP2 in vitro; the heterodimer then binds to its receptor BMPR1A /ALK3 and may induce HAMP expression.

Its subcellular location is the secreted. Growth factor of the TGF-beta superfamily that plays essential roles in many developmental processes including cartilage and bone formation. Also plays an important role in the regulation of HAMP/hepcidin expression and iron metabolism by acting as a ligand for hemojuvelin/HJV. Also acts to promote expression of HAMP, potentially via the interaction with its receptor BMPR1A/ALK3. Initiates the canonical BMP signaling cascade by associating with type I receptor ACVR1 and type II receptor ACVR2B. In turn, ACVR1 propagates signal by phosphorylating SMAD1/5/8 that travel to the nucleus and act as activators and repressors of transcription of target. Can also signal through non-canonical pathway such as TAZ-Hippo signaling cascade to modulate VEGF signaling by regulating VEGFR2 expression. The polypeptide is Bone morphogenetic protein 6 (Bmp6) (Rattus norvegicus (Rat)).